We begin with the raw amino-acid sequence, 295 residues long: Malonyl-[acyl-carrier protein] O-methyltransferase (295 aa).

This sequence belongs to the methyltransferase superfamily.

The catalysed reaction is malonyl-[ACP] + S-adenosyl-L-methionine = malonyl-[ACP] methyl ester + S-adenosyl-L-homocysteine. The protein operates within cofactor biosynthesis; biotin biosynthesis. Its function is as follows. Converts the free carboxyl group of a malonyl-thioester to its methyl ester by transfer of a methyl group from S-adenosyl-L-methionine (SAM). It allows to synthesize pimeloyl-ACP via the fatty acid synthetic pathway. This is Malonyl-[acyl-carrier protein] O-methyltransferase from Xylella fastidiosa (strain M23).